Here is a 151-residue protein sequence, read N- to C-terminus: SsrA-binding protein (151 aa).

It belongs to the SmpB family.

It is found in the cytoplasm. Its function is as follows. Required for rescue of stalled ribosomes mediated by trans-translation. Binds to transfer-messenger RNA (tmRNA), required for stable association of tmRNA with ribosomes. tmRNA and SmpB together mimic tRNA shape, replacing the anticodon stem-loop with SmpB. tmRNA is encoded by the ssrA gene; the 2 termini fold to resemble tRNA(Ala) and it encodes a 'tag peptide', a short internal open reading frame. During trans-translation Ala-aminoacylated tmRNA acts like a tRNA, entering the A-site of stalled ribosomes, displacing the stalled mRNA. The ribosome then switches to translate the ORF on the tmRNA; the nascent peptide is terminated with the 'tag peptide' encoded by the tmRNA and targeted for degradation. The ribosome is freed to recommence translation, which seems to be the essential function of trans-translation. The protein is SsrA-binding protein of Campylobacter concisus (strain 13826).